The primary structure comprises 127 residues: Large ribosomal subunit protein bL12 (127 aa).

The protein belongs to the bacterial ribosomal protein bL12 family. As to quaternary structure, homodimer. Part of the ribosomal stalk of the 50S ribosomal subunit. Forms a multimeric L10(L12)X complex, where L10 forms an elongated spine to which 2 to 4 L12 dimers bind in a sequential fashion. Binds GTP-bound translation factors.

In terms of biological role, forms part of the ribosomal stalk which helps the ribosome interact with GTP-bound translation factors. Is thus essential for accurate translation. This is Large ribosomal subunit protein bL12 from Leptospira interrogans serogroup Icterohaemorrhagiae serovar copenhageni (strain Fiocruz L1-130).